The primary structure comprises 209 residues: Large ribosomal subunit protein uL3 (209 aa).

This sequence belongs to the universal ribosomal protein uL3 family. Part of the 50S ribosomal subunit. Forms a cluster with proteins L14 and L19.

In terms of biological role, one of the primary rRNA binding proteins, it binds directly near the 3'-end of the 23S rRNA, where it nucleates assembly of the 50S subunit. In Oceanobacillus iheyensis (strain DSM 14371 / CIP 107618 / JCM 11309 / KCTC 3954 / HTE831), this protein is Large ribosomal subunit protein uL3.